The chain runs to 545 residues: Arginine-containing cyclodipeptide synthase ateA (545 aa).

Polar residues predominate over residues 390-425 (GNQQTPTQSADMDSTVSHRQQQPASSRSYTSKQNQM). The disordered stretch occupies residues 390 to 433 (GNQQTPTQSADMDSTVSHRQQQPASSRSYTSKQNQMPRPLVISV). Positions 434–438 (DDPSE) match the Conserved DDXXE motif motif.

This sequence belongs to the arginine-containing cyclodipeptide synthase family.

It carries out the reaction L-glutamyl-tRNA(Glu) + L-arginyl-tRNA(Arg) = cyclo(L-arginyl-L-glutamyl) + tRNA(Glu) + tRNA(Arg) + 2 H(+). It functions in the pathway secondary metabolite biosynthesis. Its function is as follows. Arginine-containing cyclodipeptide synthase; part of the cluster that mediates the biosynthesis of a highly modified cyclo-arginine-glutamate dipeptide (cRE). Within the pathway, ateA acts as the scaffold-generating enzyme and is responsible for formation of the cyclo-Arg-Glu diketopiperazine (cRW) from L-arginyl-tRNA(Arg) + L-glutamyl-tRNA(Glu). Additional enzymes from the cluster then further modify the cyclo-Arg-Glu diketopiperazine (cRW) scaffold. The sequence is that of Arginine-containing cyclodipeptide synthase ateA from Aspergillus terreus.